We begin with the raw amino-acid sequence, 111 residues long: uncharacterized protein (111 aa).

This is an uncharacterized protein from Paracoccus denitrificans.